The sequence spans 370 residues: Pulmonary surfactant-associated protein B (370 aa).

The first 24 residues, 1–24, serve as a signal peptide directing secretion; it reads MAKSHLPPWLLLLLLPTLCGPGTA. Positions 25–184 are excised as a propeptide; the sequence is VWATSPLACA…PHTQDLSAQR (160 aa). In terms of domain architecture, Saposin A-type spans 26 to 66; sequence WATSPLACAQGPEFWCQSLEQALQCKALGHCLQEVWGHVGA. Saposin B-type domains follow at residues 66 to 148, 188 to 265, and 284 to 359; these read ADDL…QPGS, PLPL…SSVD, and QDPE…VATL. 9 disulfide bridges follow: Cys-70–Cys-144, Cys-73–Cys-138, Cys-101–Cys-113, Cys-192–Cys-261, Cys-195–Cys-255, Cys-219–Cys-230, Cys-288–Cys-355, Cys-291–Cys-349, and Cys-314–Cys-324. The propeptide occupies 264–370; the sequence is VDSIGQVPPT…PLQCIQSPHF (107 aa). An N-linked (GlcNAc...) asparagine glycan is attached at Asn-300.

In terms of assembly, homodimer; disulfide-linked.

The protein localises to the secreted. It is found in the extracellular space. It localises to the surface film. Its function is as follows. Pulmonary surfactant-associated proteins promote alveolar stability by lowering the surface tension at the air-liquid interface in the peripheral air spaces. SP-B increases the collapse pressure of palmitic acid to nearly 70 millinewtons per meter. The chain is Pulmonary surfactant-associated protein B (SFTPB) from Oryctolagus cuniculus (Rabbit).